Here is a 54-residue protein sequence, read N- to C-terminus: VILLLLIASIPSDAVQLKTKDDMPLASFHGNARRTLQMLSNKRICCYPNEWCCD.

The first 14 residues, 1–14 (VILLLLIASIPSDA), serve as a signal peptide directing secretion. Residues 15 to 43 (VQLKTKDDMPLASFHGNARRTLQMLSNKR) constitute a propeptide that is removed on maturation. Glu50 carries the 4-carboxyglutamate modification. Trp51 is modified (6'-bromotryptophan).

It belongs to the conotoxin T superfamily. Contains 2 disulfide bonds that can be either 'C1-C3, C2-C4' or 'C1-C4, C2-C3', since these disulfide connectivities have been observed for conotoxins with cysteine framework V (for examples, see AC P0DQQ7 and AC P81755). Expressed by the venom duct.

The protein resides in the secreted. In Conus victoriae (Queen Victoria cone), this protein is Conotoxin vc5c.